Here is a 95-residue protein sequence, read N- to C-terminus: uncharacterized protein (95 aa).

Positions M1–A21 are cleaved as a signal peptide.

This is an uncharacterized protein from Haemophilus influenzae (strain ATCC 51907 / DSM 11121 / KW20 / Rd).